Consider the following 435-residue polypeptide: Plant UBX domain-containing protein 6 (435 aa).

3 disordered regions span residues 1–150 (MDVN…PQKV), 208–265 (ENYT…EDQP), and 311–352 (PTTT…SMSS). The segment covering 49–62 (TSSFSTFDGSSGYS) has biased composition (low complexity). Over residues 112–129 (AVEHYGGEENRAIERPEQ) the composition is skewed to basic and acidic residues. Residues 130-141 (SSRSMSEETVSS) show a composition bias toward low complexity. The region spanning 150–211 (VFTHTVTSWS…IISREEENYT (62 aa)) is the SEP 1 domain. The segment covering 211–222 (TESQAGSDSAST) has biased composition (polar residues). The segment covering 231–242 (RAKESAIERSEQ) has biased composition (basic and acidic residues). A compositionally biased stretch (acidic residues) spans 252–265 (DSAELQEQQQEDQP). In terms of domain architecture, SEP 2 spans 268–343 (VVTYTVTIWR…ESTSTEPPLT (76 aa)). Low complexity-rich tracts occupy residues 312-323 (TTTRSTSCSSQT) and 333-349 (SEST…QPPS). The UBX domain maps to 357–434 (PAAPTTSIQL…GIANSVLVQK (78 aa)).

This is Plant UBX domain-containing protein 6 from Arabidopsis thaliana (Mouse-ear cress).